The following is a 59-amino-acid chain: Chromatin protein Cren7 (59 aa).

The protein belongs to the Cren7 family. In terms of assembly, monomer. Methylated at multiple sites, to varying extents.

The protein localises to the chromosome. The protein resides in the cytoplasm. A chromatin protein, binds double-stranded DNA without sequence specificity. Constrains negative DNA supercoils. The protein is Chromatin protein Cren7 of Pyrobaculum aerophilum (strain ATCC 51768 / DSM 7523 / JCM 9630 / CIP 104966 / NBRC 100827 / IM2).